The primary structure comprises 918 residues: UPF0182 protein CPF_0011 (918 aa).

7 helical membrane passes run 8-28 (TVLI…NFII), 46-66 (LIAI…VIAI), 91-111 (FLLS…TTQW), 151-171 (AISL…ALGF), 200-220 (LAVL…LKSY), 243-263 (IFYK…FISI), and 271-291 (IIIS…VAIF). Over residues 857 to 869 (EENKNSNKDETPK) the composition is skewed to basic and acidic residues. Positions 857–876 (EENKNSNKDETPKNEITSDN) are disordered.

It belongs to the UPF0182 family.

It localises to the cell membrane. The sequence is that of UPF0182 protein CPF_0011 from Clostridium perfringens (strain ATCC 13124 / DSM 756 / JCM 1290 / NCIMB 6125 / NCTC 8237 / Type A).